A 388-amino-acid polypeptide reads, in one-letter code: Sulfate adenylyltransferase (388 aa).

Belongs to the sulfate adenylyltransferase family.

It catalyses the reaction sulfate + ATP + H(+) = adenosine 5'-phosphosulfate + diphosphate. It functions in the pathway sulfur metabolism; hydrogen sulfide biosynthesis; sulfite from sulfate: step 1/3. In Acaryochloris marina (strain MBIC 11017), this protein is Sulfate adenylyltransferase.